A 143-amino-acid polypeptide reads, in one-letter code: 3-dehydroquinate dehydratase (143 aa).

The Proton acceptor role is filled by tyrosine 21. Substrate is bound by residues asparagine 73, histidine 79, and aspartate 86. Histidine 99 (proton donor) is an active-site residue. Substrate is bound by residues 100–101 (IS) and arginine 110.

The protein belongs to the type-II 3-dehydroquinase family. In terms of assembly, homododecamer.

It catalyses the reaction 3-dehydroquinate = 3-dehydroshikimate + H2O. It participates in metabolic intermediate biosynthesis; chorismate biosynthesis; chorismate from D-erythrose 4-phosphate and phosphoenolpyruvate: step 3/7. Its function is as follows. Catalyzes a trans-dehydration via an enolate intermediate. This chain is 3-dehydroquinate dehydratase, found in Deinococcus radiodurans (strain ATCC 13939 / DSM 20539 / JCM 16871 / CCUG 27074 / LMG 4051 / NBRC 15346 / NCIMB 9279 / VKM B-1422 / R1).